Reading from the N-terminus, the 263-residue chain is Small ribosomal subunit protein eS4 (263 aa).

One can recognise an S4 RNA-binding domain in the interval 42-104 (LPLIIFLRNR…TGEHFRLVYD (63 aa)).

It belongs to the eukaryotic ribosomal protein eS4 family. Component of the small ribosomal subunit.

It is found in the cytoplasm. Functionally, component of the small ribosomal subunit. The ribosome is a large ribonucleoprotein complex responsible for the synthesis of proteins in the cell. The polypeptide is Small ribosomal subunit protein eS4 (rps4) (Xenopus laevis (African clawed frog)).